Reading from the N-terminus, the 97-residue chain is UPF0213 protein YE0453 (97 aa).

The GIY-YIG domain maps to 4-79 (SLWHLYLLRT…KQLSKQQKEK (76 aa)).

Belongs to the UPF0213 family.

The polypeptide is UPF0213 protein YE0453 (Yersinia enterocolitica serotype O:8 / biotype 1B (strain NCTC 13174 / 8081)).